The chain runs to 328 residues: Global transcription regulator sge1 (328 aa).

Disordered regions lie at residues 94–120 and 251–293; these read PGEK…PRQR and QMHQ…QYVH. Composition is skewed to low complexity over residues 106–116, 251–261, and 282–293; these read KSTTQSGGISK, QMHQPQVHQPL, and AHQPQVHQQYVH.

The protein belongs to the MIT1/WOR1 family.

The protein resides in the nucleus. Functionally, global transcriptional regulator of transcription that impacts, but is not absolutely required for secondary metabolism and pathogenicity on maize. Regulates synthesis of multiple secondary metabolites, including fumonisins and fusarins. This chain is Global transcription regulator sge1, found in Gibberella moniliformis (strain M3125 / FGSC 7600) (Maize ear and stalk rot fungus).